A 91-amino-acid chain; its full sequence is UPF0250 protein PP_4802 (91 aa).

The protein belongs to the UPF0250 family.

The polypeptide is UPF0250 protein PP_4802 (Pseudomonas putida (strain ATCC 47054 / DSM 6125 / CFBP 8728 / NCIMB 11950 / KT2440)).